The chain runs to 72 residues: Large ribosomal subunit protein uL29 (72 aa).

The protein belongs to the universal ribosomal protein uL29 family.

The sequence is that of Large ribosomal subunit protein uL29 from Prochlorococcus marinus (strain MIT 9215).